We begin with the raw amino-acid sequence, 185 residues long: Ribosome-recycling factor (185 aa).

A disordered region spans residues 141 to 160; sequence RIQKDGEAGEDEVGRAEKEL.

It belongs to the RRF family.

Its subcellular location is the cytoplasm. In terms of biological role, responsible for the release of ribosomes from messenger RNA at the termination of protein biosynthesis. May increase the efficiency of translation by recycling ribosomes from one round of translation to another. The chain is Ribosome-recycling factor from Rhodococcus jostii (strain RHA1).